A 296-amino-acid chain; its full sequence is MYGWINIDKPCGISSASVVSRVKKILNVKKVGYAGTLDPLASGILPIAIGEATKLMPYAVDVQKSYIFTVQWGEQRTTDDASGEIIKKSNIVPHFEEINKIIPNFIGMIEQVPPNFSAIHVDGVRAFKLARNGQEFELSSRYVNVVRLKLLSFSRENNTADFYLLCKKGVYVRSIARDLGIRLGCFGYVAKLRRVRVGYFKQKNAITLDKLKILHNNGDTHKYLLPLWYVLQDIKHLDDVFCSVEISKIKNGQNIQLNNLYMVKNCDMCYVSTHSVPVAICSIANNVIKPVRVFNV.

The Nucleophile role is filled by aspartate 38.

This sequence belongs to the pseudouridine synthase TruB family. Type 1 subfamily.

It catalyses the reaction uridine(55) in tRNA = pseudouridine(55) in tRNA. In terms of biological role, responsible for synthesis of pseudouridine from uracil-55 in the psi GC loop of transfer RNAs. The polypeptide is tRNA pseudouridine synthase B (Ehrlichia ruminantium (strain Gardel)).